Consider the following 159-residue polypeptide: Cell division protein SepF (159 aa).

Residues 23–69 (DYIEEDEEQKPASKSAFDSDHTVTPLASTTAPAASSTTKPFPGGRVN) are disordered. Positions 44 to 64 (TVTPLASTTAPAASSTTKPFP) are enriched in low complexity.

This sequence belongs to the SepF family. In terms of assembly, homodimer. Interacts with FtsZ.

The protein localises to the cytoplasm. Functionally, cell division protein that is part of the divisome complex and is recruited early to the Z-ring. Probably stimulates Z-ring formation, perhaps through the cross-linking of FtsZ protofilaments. Its function overlaps with FtsA. The protein is Cell division protein SepF of Bifidobacterium longum (strain DJO10A).